The primary structure comprises 355 residues: Guanine nucleotide-binding protein G(i) subunit alpha-2 (355 aa).

A lipid anchor (N-myristoyl glycine) is attached at G2. The S-palmitoyl cysteine moiety is linked to residue C3. Residues R32–F355 enclose the G-alpha domain. The G1 motif stretch occupies residues K35–T48. GTP contacts are provided by residues G40–S47, L176–T182, D201–Q205, N270–D273, and A327. Positions 47 and 182 each coordinate Mg(2+). Residues D174–T182 are G2 motif. The segment at F197–R206 is G3 motif. The tract at residues I266–D273 is G4 motif. Positions T325–T330 are G5 motif.

The protein belongs to the G-alpha family. G(i/o/t/z) subfamily. In terms of assembly, g proteins are composed of 3 units; alpha, beta and gamma. The alpha chain contains the guanine nucleotide binding site.

The protein resides in the cytoplasm. It is found in the cytoskeleton. It localises to the microtubule organizing center. The protein localises to the centrosome. Its subcellular location is the cell membrane. Functionally, guanine nucleotide-binding proteins (G proteins) are involved as modulators or transducers in various transmembrane signaling systems. The G(i) proteins are involved in hormonal regulation of adenylate cyclase: they inhibit the cyclase in response to beta-adrenergic stimuli. May play a role in cell division. This chain is Guanine nucleotide-binding protein G(i) subunit alpha-2 (gnai2), found in Oryzias latipes (Japanese rice fish).